A 187-amino-acid chain; its full sequence is MAESHGGAKGPAAGAHTGAEGGHGGGFPPFESSTYASQLVSLAIFFVVLYVIVSKLALPKVGGAIEARQNKIEGDLAEAQTLRDQSDAALKAYESELASARSRAQAIGNESRDKANAQAETERKALEEQLAAKLAGAEKTIASTRTAAMSNVRGIAADAAGQIVQQLTGVVPDAASVNAAVDASLKG.

The interval 1 to 25 is disordered; the sequence is MAESHGGAKGPAAGAHTGAEGGHGG. A helical transmembrane segment spans residues 39–59; that stretch reads LVSLAIFFVVLYVIVSKLALP. Residues 103 to 122 are disordered; the sequence is RAQAIGNESRDKANAQAETE. Residues 110 to 122 show a composition bias toward basic and acidic residues; that stretch reads ESRDKANAQAETE.

This sequence belongs to the ATPase B chain family. In terms of assembly, F-type ATPases have 2 components, F(1) - the catalytic core - and F(0) - the membrane proton channel. F(1) has five subunits: alpha(3), beta(3), gamma(1), delta(1), epsilon(1). F(0) has three main subunits: a(1), b(2) and c(10-14). The alpha and beta chains form an alternating ring which encloses part of the gamma chain. F(1) is attached to F(0) by a central stalk formed by the gamma and epsilon chains, while a peripheral stalk is formed by the delta and b chains.

It localises to the cell inner membrane. Its function is as follows. F(1)F(0) ATP synthase produces ATP from ADP in the presence of a proton or sodium gradient. F-type ATPases consist of two structural domains, F(1) containing the extramembraneous catalytic core and F(0) containing the membrane proton channel, linked together by a central stalk and a peripheral stalk. During catalysis, ATP synthesis in the catalytic domain of F(1) is coupled via a rotary mechanism of the central stalk subunits to proton translocation. In terms of biological role, component of the F(0) channel, it forms part of the peripheral stalk, linking F(1) to F(0). The b'-subunit is a diverged and duplicated form of b found in plants and photosynthetic bacteria. The chain is ATP synthase subunit b 2 (atpF2) from Bradyrhizobium diazoefficiens (strain JCM 10833 / BCRC 13528 / IAM 13628 / NBRC 14792 / USDA 110).